Reading from the N-terminus, the 84-residue chain is RNA-binding protein Hfq (84 aa).

One can recognise a Sm domain in the interval 9 to 68 (DPYLNTLRKERVPVSIYLVNGIKLQGQIESFDQFVILLKNTVSQMVYKHAISTVVPGRPV).

This sequence belongs to the Hfq family. As to quaternary structure, homohexamer.

RNA chaperone that binds small regulatory RNA (sRNAs) and mRNAs to facilitate mRNA translational regulation in response to envelope stress, environmental stress and changes in metabolite concentrations. Also binds with high specificity to tRNAs. This chain is RNA-binding protein Hfq, found in Stutzerimonas stutzeri (strain A1501) (Pseudomonas stutzeri).